A 169-amino-acid polypeptide reads, in one-letter code: MPLLDSFTVDHTRMNAPAVRVAKHMTTPKGDAITVFDLRFCAPNKDILSERGIHTLEHLFAGFMRDHLNGDDVEIIDISPMGCRTGFYMSLIGVPTERQVADAWLASMEDVLKVVEQSEIPELNEYQCGTYEMHSLEQAQDIARNIIAAGVSVNRNDDLKLSDEILGKL.

The Fe cation site is built by His54, His58, and Cys128.

Belongs to the LuxS family. As to quaternary structure, homodimer. The cofactor is Fe cation.

It carries out the reaction S-(5-deoxy-D-ribos-5-yl)-L-homocysteine = (S)-4,5-dihydroxypentane-2,3-dione + L-homocysteine. Involved in the synthesis of autoinducer 2 (AI-2) which is secreted by bacteria and is used to communicate both the cell density and the metabolic potential of the environment. The regulation of gene expression in response to changes in cell density is called quorum sensing. Catalyzes the transformation of S-ribosylhomocysteine (RHC) to homocysteine (HC) and 4,5-dihydroxy-2,3-pentadione (DPD). This is S-ribosylhomocysteine lyase from Shewanella oneidensis (strain ATCC 700550 / JCM 31522 / CIP 106686 / LMG 19005 / NCIMB 14063 / MR-1).